The following is a 981-amino-acid chain: MSPLKIHGPIRIRSMQTGITKWKEGSFEIVEKENKVSLVVHYNTGGIPRIFQLSHNIKNVVLRPSGAKQSRLMLTLQDNSFLSIDKVPSKDAEEMRLFLDAVHQNRLHAAMKPSQGSGSFGAILGSRTSQKETNRQLSYSDNQASSKRGSLETKDDIPFRKVLGNPGRGSIKTATGSGITVTRTIPSLTSASTPLRSGLLENRTEKRKRMLSSGSELNEDYPKENDSSSNNKAMTDPSRKYLTSSREKQLSLKQSEENRTSGLLPLQSSSFYGSRTGSKDYSSGSTNLDRTNVSGQTPSAKRSLGFLPQPAPLSVKKLRCNQDYTGWNKPRVPLSSHQQQQLQGFSNLGNTCYMNAILQSLFSLQSFANDLLKQGIPWKKIPLNALIRRFAHLLVKKDICNSETKKDLLKKVKNAISATAERFSGYMQNDAHEFLSQCLDQLKEDMEKLNKTWKTEPVPGEENSPDISATRVYTCPVITNLEFEVQHSIICKACGEIIPKREQFNDLSIDLPRRKKPLPPRSIQDSLDLFFRAEELEYSCEKCGGKCALVRHKFNRLPRILILHLKRYSFNVTLSLNNKIGQQVIIPRYLTLSSHCTENTKPPFTLGWSAHMAISRPLKASQMVNSCITSPSTPSKNFTFKSKSSLALCLDSDSEDELKRSVALSQRLCEMSGCEQQQDDLEKDSKPCRIEPDKSELENSGFDGMSEEELLAAVLEMSKREASPTLSHEDDDKPTSSPDTGFAEDDIQEMPENQDPVETEKPKTVTEPDPASFTEITKDCDENKENKTPEGSQGEVDWLQQYDMEREREEQELQQALAQSLQEQEAWEQKEDDDLKRATELSLQEFNNSFLDSLGSDEDSGNEDVLDMEYTEAEAEELKRNAETGNLPHSYRLISVVSHIGSTSSSGHYISDVYDIKKQAWFTYNDLEVSKIQEASVQSDRDRSGYIFFYMHKEIFDELLETEKNSQALSMEVGKTTRQAL.

Positions Lys32–Asn34 match the KEN box 1 motif. 2 consecutive short sequence motifs (D-box) follow at residues Arg71–Asn79 and Arg96–Asn105. Residues Met111–Pro308 are disordered. Ser114 bears the Phosphoserine mark. Positions Arg135–Arg148 are enriched in polar residues. Positions Gly149–Phe159 are enriched in basic and acidic residues. The D-box 3 motif lies at Arg160–Arg168. Ser170 is subject to Phosphoserine. Residues Lys172–Leu195 show a composition bias toward polar residues. Ser212 carries the post-translational modification Phosphoserine. Residues Lys223–Asn225 carry the KEN box 2 motif. Over residues Ser245–Arg259 the composition is skewed to basic and acidic residues. A compositionally biased stretch (polar residues) spans Leu266–Ala300. One can recognise a USP domain in the interval Gln343–Lys953. The active-site Nucleophile is the Cys352. At Ser630 the chain carries Phosphoserine; by CDK2. Residues Ser652 and Ser654 each carry the phosphoserine modification. Disordered regions lie at residues Gly673–Gly704 and Lys719–Glu831. Basic and acidic residues-rich tracts occupy residues Lys683–Leu697 and Lys719–Pro734. The UIM 1 domain maps to Ser706–Thr725. Ser772 carries the phosphoserine modification. Over residues Ile776–Thr788 the composition is skewed to basic and acidic residues. The KEN box 3 motif lies at Lys784–Asn786. 2 UIM domains span residues Arg808–Trp827 and Lys830–Ser849. A compositionally biased stretch (low complexity) spans Leu813–Gln824. The active-site Proton acceptor is His908.

It belongs to the peptidase C19 family. As to quaternary structure, interacts with FZR1/CDH1. Interacts with CDT1. Post-translationally, polyubiquitinated via 'Lys-11'-linked ubiquitin by the APC(CDH1) complex during late mitosis, leading to its degradation. Able to mediate auto-deubiquitination. Phosphorylated at Ser-630 by CDK2 during G1/S phase but not during mitosis; phosphorylation at Ser-630 is required for deubiquitinase activity. Also polyubiquitinated during early G1 phase, without leading to degradation. Phosphorylated at Ser-114 by ATM following DNA damage, which in turn increases its deubiquitination activity towards BLM.

The protein localises to the nucleus. Its subcellular location is the chromosome. It carries out the reaction Thiol-dependent hydrolysis of ester, thioester, amide, peptide and isopeptide bonds formed by the C-terminal Gly of ubiquitin (a 76-residue protein attached to proteins as an intracellular targeting signal).. Its function is as follows. Deubiquitinase that plays a role in different processes including cell cycle regulation, DNA replication or DNA damage response. Antagonizes the anaphase-promoting complex (APC/C) during G1/S transition by mediating deubiquitination of cyclin-A (CCNA1 and CCNA2), thereby promoting S phase entry. Specifically mediates deubiquitination of 'Lys-11'-linked polyubiquitin chains, a specific ubiquitin-linkage type mediated by the APC/C complex. Phosphorylation at Ser-628 during G1/S phase maximizes the deubiquitinase activity, leading to prevent degradation of cyclin-A (CCNA1 and CCNA2). Plays an important role in the regulation of DNA replication by stabilizing the licensing factor CDT1. Also plays an essential role beyond S-phase entry to promote the efficiency and fidelity of replication by deubiquitinating checkpoint kinase 1/CHK1, promoting its stability. Sustains the DNA damage response (DDR) by deubiquitinating and stabilizing the ATP-dependent DNA helicase BLM. Mechanistically, DNA double-strand breaks (DSB) promotes ATM-mediated phosphorylation of USP37 and enhances the binding between USP37 and BLM. Promotes cell migration by deubiquitinating and stabilizing the epithelial-mesenchymal transition (EMT)-inducing transcription factor SNAI. Plays a role in the regulation of mitotic spindle assembly and mitotic progression by associating with chromatin-associated WAPL and stabilizing it through deubiquitination. The protein is Ubiquitin carboxyl-terminal hydrolase 37 (USP37) of Canis lupus familiaris (Dog).